We begin with the raw amino-acid sequence, 878 residues long: Aminopeptidase M1-C (878 aa).

Positions 102–209 (LGEGVLAMDF…MSTYLVAIVV (108 aa)) are required for membrane association. Residues Glu142 and 275–279 (GAMEN) each bind substrate. Residue His311 coordinates Zn(2+). Catalysis depends on Glu312, which acts as the Proton acceptor. His315 and Glu334 together coordinate Zn(2+). Residues 726 to 727 (LL) carry the Dileucine internalization motif motif.

This sequence belongs to the peptidase M1 family. As to quaternary structure, homodimer. Requires Zn(2+) as cofactor.

Its subcellular location is the membrane. The protein localises to the microsome membrane. The protein resides in the cytoplasm. It catalyses the reaction Release of an N-terminal amino acid, Xaa-|-Yaa- from a peptide, amide or arylamide. Xaa is preferably Ala, but may be most amino acids including Pro (slow action). When a terminal hydrophobic residue is followed by a prolyl residue, the two may be released as an intact Xaa-Pro dipeptide.. The chain is Aminopeptidase M1-C from Oryza sativa subsp. japonica (Rice).